The following is a 352-amino-acid chain: 3-isopropylmalate dehydrogenase (352 aa).

Substrate-binding residues include Arg96, Arg106, Arg134, and Asp220. The Mg(2+) site is built by Asp220, Asp244, and Asp248. 277–289 provides a ligand contact to NAD(+); it reads GSAPDIAGKNLAN.

The protein belongs to the isocitrate and isopropylmalate dehydrogenases family. LeuB type 1 subfamily. In terms of assembly, homodimer. It depends on Mg(2+) as a cofactor. Mn(2+) serves as cofactor.

Its subcellular location is the cytoplasm. It carries out the reaction (2R,3S)-3-isopropylmalate + NAD(+) = 4-methyl-2-oxopentanoate + CO2 + NADH. The protein operates within amino-acid biosynthesis; L-leucine biosynthesis; L-leucine from 3-methyl-2-oxobutanoate: step 3/4. Its function is as follows. Catalyzes the oxidation of 3-carboxy-2-hydroxy-4-methylpentanoate (3-isopropylmalate) to 3-carboxy-4-methyl-2-oxopentanoate. The product decarboxylates to 4-methyl-2 oxopentanoate. This chain is 3-isopropylmalate dehydrogenase, found in Desulfitobacterium hafniense (strain Y51).